Reading from the N-terminus, the 597-residue chain is (E)-sabinene hydrate synthase, chloroplastic (597 aa).

The N-terminal 47 residues, 1–47, are a transit peptide targeting the chloroplast; the sequence is MSTISINHVGILRNPLQCKNKRTSINKPWSLSLPRSSPASRLVKPCR. Mn(2+) is bound by residues Asp353 and Asp357. The short motif at 353-357 is the DDXXD motif element; the sequence is DDVYD. 2 homodimerization regions span residues 359–365 and 431–468; these read YGTLDEL and EAGW…VSLP. Asp495 and Glu503 together coordinate Mn(2+).

The protein belongs to the terpene synthase family. Homodimer. It depends on Mn(2+) as a cofactor. Mg(2+) is required as a cofactor.

Its subcellular location is the plastid. The protein localises to the chloroplast. It catalyses the reaction (2E)-geranyl diphosphate + H2O = sabinene hydrate + diphosphate. It functions in the pathway secondary metabolite biosynthesis; terpenoid biosynthesis. Its function is as follows. Involved in the biosynthesis of phenolic monoterpenes natural products. Monoterpene synthase which catalyzes the conversion of geranyl diphosphate (GPP) to sabinene hydrate, specifically (E)-sabinene hydrate, and the formation of minor amounts and traces of several other monoterpenes (e.g. mainly alpha-pinene, limonene and alpha-terpineol). This chain is (E)-sabinene hydrate synthase, chloroplastic, found in Thymus vulgaris (Thyme).